A 115-amino-acid polypeptide reads, in one-letter code: Large ribosomal subunit protein bL20c (115 aa).

Belongs to the bacterial ribosomal protein bL20 family.

Its subcellular location is the plastid. It localises to the chloroplast. Binds directly to 23S ribosomal RNA and is necessary for the in vitro assembly process of the 50S ribosomal subunit. It is not involved in the protein synthesizing functions of that subunit. This chain is Large ribosomal subunit protein bL20c, found in Angiopteris evecta (Mule's foot fern).